The primary structure comprises 321 residues: Mas-related G-protein coupled receptor member H (321 aa).

The Extracellular portion of the chain corresponds to 1-35; sequence MEPLAMTLYPLESTQPTRNKTPNETTWSSEHTDDH. N23 carries an N-linked (GlcNAc...) asparagine glycan. Residues 36–56 traverse the membrane as a helical segment; it reads TYFLVSLVICSLGLAGNGLLI. Topologically, residues 57 to 71 are cytoplasmic; the sequence is WFLIFCIKRKPFTIY. The chain crosses the membrane as a helical span at residues 72–92; that stretch reads ILHLAIADFMVLLCSSIMKLV. The Extracellular segment spans residues 93–102; the sequence is NTFHIYNMTL. N-linked (GlcNAc...) asparagine glycosylation is present at N99. The helical transmembrane segment at 103–126 threads the bilayer; it reads ESYAILFMIFGYNTGLHLLTAISV. The Cytoplasmic segment spans residues 127–147; that stretch reads ERCLSVLYPIWYQCQRPKHQS. A helical transmembrane segment spans residues 148–168; the sequence is AVACMLLWALSVLVSGLENFF. At 169-188 the chain is on the extracellular side; that stretch reads CILEVKPQFPECRYVYIFSC. A helical membrane pass occupies residues 189–209; the sequence is ILTFLVFVPLMIFSNLILFIQ. Topologically, residues 210-225 are cytoplasmic; that stretch reads VCCNLKPRQPTKLYVI. A helical transmembrane segment spans residues 226 to 246; the sequence is IMTTVILFLVFAMPMKVLLII. Position 247 (G247) is a topological domain, extracellular. A helical membrane pass occupies residues 248 to 271; sequence YYSSSLDDSVWDSLPYLNMLSTIN. The Cytoplasmic segment spans residues 272 to 320; it reads CSINPIVYFVVGSLRRKRSRKSLKEALQKVFEEKPVVASRENVTQFSLP.

This sequence belongs to the G-protein coupled receptor 1 family. Mas subfamily.

It is found in the cell membrane. Its function is as follows. Orphan receptor. May regulate nociceptor function and/or development, including the sensation or modulation of pain. The polypeptide is Mas-related G-protein coupled receptor member H (Mrgprh) (Mus musculus (Mouse)).